Consider the following 150-residue polypeptide: Macrodomain Ter protein (150 aa).

It belongs to the MatP family. As to quaternary structure, homodimer.

The protein localises to the cytoplasm. Functionally, required for spatial organization of the terminus region of the chromosome (Ter macrodomain) during the cell cycle. Prevents early segregation of duplicated Ter macrodomains during cell division. Binds specifically to matS, which is a 13 bp signature motif repeated within the Ter macrodomain. This is Macrodomain Ter protein from Escherichia coli (strain SMS-3-5 / SECEC).